Reading from the N-terminus, the 25-residue chain is Acyl carrier protein (25 aa).

In terms of domain architecture, Carrier spans 2-25 (ESIEQRVKKIVAEQLGVAEAEIKA).

The protein belongs to the acyl carrier protein (ACP) family. In terms of processing, 4'-phosphopantetheine is transferred from CoA to a specific serine of apo-ACP by AcpS. This modification is essential for activity because fatty acids are bound in thioester linkage to the sulfhydryl of the prosthetic group.

The protein localises to the cytoplasm. It functions in the pathway lipid metabolism; fatty acid biosynthesis. In terms of biological role, carrier of the growing fatty acid chain in fatty acid biosynthesis. The sequence is that of Acyl carrier protein (acpP) from Alcaligenes faecalis.